The primary structure comprises 561 residues: Phosphoinositide phospholipase C 1 (561 aa).

The 34-residue stretch at 21–54 folds into the EF-hand domain; the sequence is EPPEEIKNLFHDYSQDDRMSADEMLRFVIQVQGE. Residues 105–249 enclose the PI-PLC X-box domain; it reads QDMNQPLSHY…LKNKILISTK (145 aa). Residues His-120 and His-166 contribute to the active site. Residues 256–266 show a composition bias toward polar residues; the sequence is QTQISKGSTTD. The disordered stretch occupies residues 256-285; sequence QTQISKGSTTDESTRAKKISDAEEQVQEED. The segment covering 267–276 has biased composition (basic and acidic residues); sequence ESTRAKKISD. One can recognise a PI-PLC Y-box domain in the interval 294–410; it reads RDLISIHAGN…GYVKKPDVLL (117 aa). The region spanning 414-541 is the C2 domain; that stretch reads PEGEIFDPCS…PGIRAVRLHD (128 aa). 5 residues coordinate Ca(2+): Asp-452, Asp-458, Asp-510, Asp-512, and Asp-518.

Ca(2+) serves as cofactor. As to expression, expressed in stems, leaves, roots, flowers and siliques. Predominant in the vascular tissues of roots and leaves.

The protein resides in the cell membrane. It carries out the reaction a 1,2-diacyl-sn-glycero-3-phospho-(1D-myo-inositol-4,5-bisphosphate) + H2O = 1D-myo-inositol 1,4,5-trisphosphate + a 1,2-diacyl-sn-glycerol + H(+). Functionally, the production of the second messenger molecules diacylglycerol (DAG) and inositol 1,4,5-trisphosphate (IP3) is mediated by activated phosphatidylinositol-specific phospholipase C enzymes. Required for secondary responses to abscisic acid signals. The polypeptide is Phosphoinositide phospholipase C 1 (PLC1) (Arabidopsis thaliana (Mouse-ear cress)).